Here is a 387-residue protein sequence, read N- to C-terminus: Dynactin subunit 2 (387 aa).

3 coiled-coil regions span residues L99–R125, S256–T282, and T355–K387.

It belongs to the dynactin subunit 2 family. In terms of assembly, subunit of dynactin, a multiprotein complex associated with dynein.

It is found in the cytoplasm. Its subcellular location is the cytoskeleton. The protein resides in the membrane. Its function is as follows. Modulates cytoplasmic dynein binding to an organelle, and plays a role in prometaphase chromosome alignment and spindle organization during mitosis. In Anopheles gambiae (African malaria mosquito), this protein is Dynactin subunit 2.